The following is a 1532-amino-acid chain: IgA-specific serine endopeptidase autotransporter (1532 aa).

The first 27 residues, 1–27, serve as a signal peptide directing secretion; that stretch reads MKAKRFKINAISLSIFLAYALTPYSEA. Positions 28–322 constitute a Peptidase S6 domain; the sequence is ALVRDDVDYQ…NIYKKEFADK (295 aa). The active site involves Ser278. Disordered stretches follow at residues 979-1136 and 1166-1217; these read GRPV…KDNS and LEDE…NTEL. The segment covering 989–1004 has biased composition (polar residues); it reads AANTASQAQKATQTDG. Residues 1045–1101 show a composition bias toward basic and acidic residues; it reads EAEKVARQKDEEAKRKAAEIARQQEEARKAAELAAKQKAEAERKARELARQKAEEAS. Residues 1107 to 1116 show a composition bias toward basic residues; that stretch reads KPKRRRRRAI. A compositionally biased stretch (basic and acidic residues) spans 1207–1217; the sequence is SDKHPQDNTEL. The region spanning 1280-1532 is the Autotransporter domain; that stretch reads ADAEKNSVWM…SGQIKIQIRF (253 aa).

It localises to the periplasm. The protein localises to the secreted. The protein resides in the cell surface. Its subcellular location is the cell outer membrane. The enzyme catalyses Cleavage of immunoglobulin A molecules at certain Pro-|-Xaa bonds in the hinge region. No small molecule substrates are known.. Functionally, this protease is specific for immunoglobulin A. This Neisseria gonorrhoeae protein is IgA-specific serine endopeptidase autotransporter (iga).